The sequence spans 338 residues: Methionine import ATP-binding protein MetN 1 (338 aa).

The region spanning 2–241 is the ABC transporter domain; sequence IELHQVSKSF…AKHATTKRFV (240 aa). 38-45 contributes to the ATP binding site; it reads GYSGAGKS.

It belongs to the ABC transporter superfamily. Methionine importer (TC 3.A.1.24) family. The complex is composed of two ATP-binding proteins (MetN), two transmembrane proteins (MetI) and a solute-binding protein (MetQ).

It is found in the cell membrane. The catalysed reaction is L-methionine(out) + ATP + H2O = L-methionine(in) + ADP + phosphate + H(+). It catalyses the reaction D-methionine(out) + ATP + H2O = D-methionine(in) + ADP + phosphate + H(+). Functionally, part of the ABC transporter complex MetNIQ involved in methionine import. Responsible for energy coupling to the transport system. The chain is Methionine import ATP-binding protein MetN 1 from Listeria innocua serovar 6a (strain ATCC BAA-680 / CLIP 11262).